The chain runs to 175 residues: RNA pyrophosphohydrolase (175 aa).

The region spanning 8-159 is the Nudix hydrolase domain; the sequence is PYRTCVGMML…KRPVYERVVK (152 aa). The short motif at 47–68 is the Nudix box element; it reads GGVDPGEDPWTAAKRELYEETS.

Belongs to the Nudix hydrolase family. RppH subfamily. Requires a divalent metal cation as cofactor.

In terms of biological role, accelerates the degradation of transcripts by removing pyrophosphate from the 5'-end of triphosphorylated RNA, leading to a more labile monophosphorylated state that can stimulate subsequent ribonuclease cleavage. In Rhodopseudomonas palustris (strain BisB18), this protein is RNA pyrophosphohydrolase.